The following is a 335-amino-acid chain: NAC domain-containing protein 87 (335 aa).

In terms of domain architecture, NAC spans 21–172 (LPPGFRFHPT…EWVVCRVFHK (152 aa)). The DNA-binding element occupies 119 to 178 (VGMKKTLVFYRGRAPKGEKTNWVMHEYRLEGKYSYYNLPKSARDEWVVCRVFHKNNPSTT).

It is found in the nucleus. Its function is as follows. Binds to the promoter regions of genes involved in chlorophyll catabolic processes, such as NYC1, SGR1, SGR2 and PAO. The protein is NAC domain-containing protein 87 of Arabidopsis thaliana (Mouse-ear cress).